A 417-amino-acid chain; its full sequence is Gamma-glutamyl phosphate reductase (417 aa).

This sequence belongs to the gamma-glutamyl phosphate reductase family.

The protein resides in the cytoplasm. It carries out the reaction L-glutamate 5-semialdehyde + phosphate + NADP(+) = L-glutamyl 5-phosphate + NADPH + H(+). Its pathway is amino-acid biosynthesis; L-proline biosynthesis; L-glutamate 5-semialdehyde from L-glutamate: step 2/2. Its function is as follows. Catalyzes the NADPH-dependent reduction of L-glutamate 5-phosphate into L-glutamate 5-semialdehyde and phosphate. The product spontaneously undergoes cyclization to form 1-pyrroline-5-carboxylate. This chain is Gamma-glutamyl phosphate reductase, found in Sodalis glossinidius (strain morsitans).